The sequence spans 381 residues: tRNA-cytidine(32) 2-sulfurtransferase (381 aa).

The PP-loop motif signature appears at serine 101–serine 106. [4Fe-4S] cluster contacts are provided by cysteine 176, cysteine 179, and cysteine 267.

It belongs to the TtcA family. Homodimer. Mg(2+) serves as cofactor. Requires [4Fe-4S] cluster as cofactor.

It is found in the cytoplasm. The enzyme catalyses cytidine(32) in tRNA + S-sulfanyl-L-cysteinyl-[cysteine desulfurase] + AH2 + ATP = 2-thiocytidine(32) in tRNA + L-cysteinyl-[cysteine desulfurase] + A + AMP + diphosphate + H(+). It functions in the pathway tRNA modification. Its function is as follows. Catalyzes the ATP-dependent 2-thiolation of cytidine in position 32 of tRNA, to form 2-thiocytidine (s(2)C32). The sulfur atoms are provided by the cysteine/cysteine desulfurase (IscS) system. The chain is tRNA-cytidine(32) 2-sulfurtransferase from Psychrobacter arcticus (strain DSM 17307 / VKM B-2377 / 273-4).